Consider the following 383-residue polypeptide: Putative 8-amino-7-oxononanoate synthase (383 aa).

Arg-22 is a binding site for substrate. A pyridoxal 5'-phosphate-binding site is contributed by 109 to 110 (GY). Residue His-134 participates in substrate binding. Pyridoxal 5'-phosphate-binding positions include Ser-182, 207–210 (DDAH), and 236–239 (TLSK). Lys-239 carries the post-translational modification N6-(pyridoxal phosphate)lysine. Thr-348 is a binding site for substrate.

It belongs to the class-II pyridoxal-phosphate-dependent aminotransferase family. BioF subfamily. In terms of assembly, homodimer. Pyridoxal 5'-phosphate serves as cofactor.

It catalyses the reaction 6-carboxyhexanoyl-[ACP] + L-alanine + H(+) = (8S)-8-amino-7-oxononanoate + holo-[ACP] + CO2. Its pathway is cofactor biosynthesis; biotin biosynthesis. Functionally, catalyzes the decarboxylative condensation of pimeloyl-[acyl-carrier protein] and L-alanine to produce 8-amino-7-oxononanoate (AON), [acyl-carrier protein], and carbon dioxide. The polypeptide is Putative 8-amino-7-oxononanoate synthase (bioF) (Caulobacter sp. (strain K31)).